Consider the following 376-residue polypeptide: Protein-glutamate methylesterase/protein-glutamine glutaminase (376 aa).

In terms of domain architecture, Response regulatory spans 4–121; it reads KVLVVDDSSF…ARNRDEAVSL (118 aa). D55 is modified (4-aspartylphosphate). Residues 142 to 161 are disordered; sequence SSQSTSTVESRTATTRTATS. Positions 145 to 161 are enriched in low complexity; sequence STSTVESRTATTRTATS. Residues 183-376 form the CheB-type methylesterase domain; it reads TGKKYQLTAI…ERMLVEVGLK (194 aa). Residues S195, H222, and D318 contribute to the active site.

This sequence belongs to the CheB family. In terms of processing, phosphorylated by CheA. Phosphorylation of the N-terminal regulatory domain activates the methylesterase activity.

It is found in the cytoplasm. It catalyses the reaction [protein]-L-glutamate 5-O-methyl ester + H2O = L-glutamyl-[protein] + methanol + H(+). It carries out the reaction L-glutaminyl-[protein] + H2O = L-glutamyl-[protein] + NH4(+). Functionally, involved in chemotaxis. Part of a chemotaxis signal transduction system that modulates chemotaxis in response to various stimuli. Catalyzes the demethylation of specific methylglutamate residues introduced into the chemoreceptors (methyl-accepting chemotaxis proteins or MCP) by CheR. Also mediates the irreversible deamidation of specific glutamine residues to glutamic acid. The chain is Protein-glutamate methylesterase/protein-glutamine glutaminase from Aliivibrio fischeri (strain ATCC 700601 / ES114) (Vibrio fischeri).